The sequence spans 238 residues: Orotidine 5'-phosphate decarboxylase (238 aa).

Residues D10, K32, 59–68, T122, R184, Q193, G213, and R214 each bind substrate; that span reads DLKLHDIPNT. K61 (proton donor) is an active-site residue.

The protein belongs to the OMP decarboxylase family. Type 1 subfamily. In terms of assembly, homodimer.

The enzyme catalyses orotidine 5'-phosphate + H(+) = UMP + CO2. Its pathway is pyrimidine metabolism; UMP biosynthesis via de novo pathway; UMP from orotate: step 2/2. Its function is as follows. Catalyzes the decarboxylation of orotidine 5'-monophosphate (OMP) to uridine 5'-monophosphate (UMP). The protein is Orotidine 5'-phosphate decarboxylase of Bacillus anthracis (strain A0248).